The sequence spans 98 residues: NADH-ubiquinone oxidoreductase chain 4L (98 aa).

The next 3 membrane-spanning stretches (helical) occupy residues Met1–Met21, Ser29–Leu49, and Ile61–Val81.

Belongs to the complex I subunit 4L family. In terms of assembly, core subunit of respiratory chain NADH dehydrogenase (Complex I) which is composed of 45 different subunits.

It is found in the mitochondrion inner membrane. The enzyme catalyses a ubiquinone + NADH + 5 H(+)(in) = a ubiquinol + NAD(+) + 4 H(+)(out). In terms of biological role, core subunit of the mitochondrial membrane respiratory chain NADH dehydrogenase (Complex I) which catalyzes electron transfer from NADH through the respiratory chain, using ubiquinone as an electron acceptor. Part of the enzyme membrane arm which is embedded in the lipid bilayer and involved in proton translocation. The polypeptide is NADH-ubiquinone oxidoreductase chain 4L (MT-ND4L) (Monachus monachus (Mediterranean monk seal)).